Consider the following 96-residue polypeptide: UPF0213 protein Lreu_0682 (96 aa).

Residues 4 to 81 (EKYYIYVLYC…KHQTRRQKEK (78 aa)) enclose the GIY-YIG domain.

It belongs to the UPF0213 family.

The sequence is that of UPF0213 protein Lreu_0682 from Limosilactobacillus reuteri (strain DSM 20016) (Lactobacillus reuteri).